Reading from the N-terminus, the 211-residue chain is Ribonuclease HII (211 aa).

An RNase H type-2 domain is found at 2 to 211 (MLILGVDEAG…TAQRLKASSV (210 aa)). D8, E9, and D106 together coordinate a divalent metal cation.

It belongs to the RNase HII family. The cofactor is Mn(2+). Mg(2+) is required as a cofactor.

It localises to the cytoplasm. It catalyses the reaction Endonucleolytic cleavage to 5'-phosphomonoester.. In terms of biological role, endonuclease that specifically degrades the RNA of RNA-DNA hybrids. The polypeptide is Ribonuclease HII (Methanothrix thermoacetophila (strain DSM 6194 / JCM 14653 / NBRC 101360 / PT) (Methanosaeta thermophila)).